The following is a 541-amino-acid chain: Nuclear receptor subfamily 5 group A member 2 (541 aa).

Polar residues predominate over residues 1 to 10 (MSSNSDTGDL). Positions 1–35 (MSSNSDTGDLQESLKHGLTPIGAGLPDRHGSPIPA) are disordered. The segment at residues 83–154 (EELCPVCGDK…KCLSVGMKLE (72 aa)) is a DNA-binding region (nuclear receptor). Cys-86, Cys-89, Cys-103, Cys-106, Cys-122, Cys-128, Cys-138, and Cys-141 together coordinate Zn(2+). 2 consecutive NR C4-type zinc fingers follow at residues 86 to 106 (CPVCGDKVSGYHYGLLTCESC) and 122 to 146 (CIENQNCQIDKTQRKRCPYCRFQKC). The interval 152–167 (KLEAVRADRMRGGRNK) is C-terminal extension (CTE). The FTZ-F1 box signature appears at 168 to 187 (FGPMYKRDRALKQQKKALIR). Lys-270 is covalently cross-linked (Glycyl lysine isopeptide (Lys-Gly) (interchain with G-Cter in SUMO1)). The 240-residue stretch at 300–539 (SIPHLILELL…NLLIEMLHAK (240 aa)) folds into the NR LBD domain. Residues 421 to 424 (GATL), Tyr-516, and Lys-520 contribute to the a phospholipid derivative site. The interval 528 to 539 (YNNLLIEMLHAK) is AF-2.

This sequence belongs to the nuclear hormone receptor family. NR5 subfamily. Monomer; Binds DNA as a monomer. Interacts with nuclear receptor corepressors NR0B1 and NR0B2; repressing NR5A2 nuclear receptor activity. Interacts with nuclear receptor coactivators CTNNB1, PPARGC1A and NCOA2; interaction takes place following ligand-binding and promotes target gene activation. Interacts (when sumoylated) with GPS2; interaction with GPS2 onto hepatic acute phase protein promoters prevents N-Cor corepressor complex dissociation. Interacts with HNF1A. Interacts with GRIP1. In terms of processing, sumoylated by SUMO1 at Lys-270 during the hepatic acute phase response, leading to promote interaction with GPS2 and prevent N-Cor corepressor complex dissociation. In terms of tissue distribution, abundantly expressed in pancreas, less in liver, very low levels in heart and lung. Expressed in the Hep-G2 cell line. Isoform 1 and isoform 2 seem to be present in fetal and adult liver and Hep-G2 cells.

The protein resides in the nucleus. It is found in the chromosome. With respect to regulation, activated by synthetic agonists RR-RJW100, SR-RJW100, endo sulfamide compound 6N and GSK8470. In terms of biological role, orphan nuclear receptor that binds DNA as a monomer to the 5'-TCAAGGCCA-3' sequence and controls expression of target genes: regulates key biological processes, such as early embryonic development, cholesterol and bile acid synthesis pathways, as well as liver and pancreas morphogenesis. Ligand-binding causes conformational change which causes recruitment of coactivators, promoting target gene activation. The specific ligand is unknown, but specific phospholipids, such as phosphatidylethanolamine, phosphatidylserine, dilauroyl phosphatidylcholine and diundecanoyl phosphatidylcholine can act as ligand in vitro. Acts as a pioneer transcription factor, which unwraps target DNA from histones and elicits local opening of closed chromatin. Plays a central role during preimplantation stages of embryonic development. Plays a minor role in zygotic genome activation (ZGA) by regulating a small set of two-cell stage genes. Plays a major role in morula development (2-16 cells embryos) by acting as a master regulator at the 8-cell stage, controlling expression of lineage-specifying transcription factors and genes involved in mitosis, telomere maintenance and DNA repair. Zygotic NR5A2 binds to both closed and open chromatin with other transcription factors, often at SINE B1/Alu repeats DNA elements, promoting chromatin accessibility at nearby regulatory regions. Also involved in the epiblast stage of development and embryonic stem cell pluripotency, by promoting expression of POU5F1/OCT4. Regulates other processes later in development, such as formation of connective tissue in lower jaw and middle ear, neural stem cell differentiation, ovarian follicle development and Sertoli cell differentiation. Involved in exocrine pancreas development and acinar cell differentiation. Acts as an essential transcriptional regulator of lipid metabolism. Key regulator of cholesterol 7-alpha-hydroxylase gene (CYP7A) expression in liver. Also acts as a negative regulator of inflammation in different organs, such as, liver and pancreas. Protects against intestinal inflammation via its ability to regulate glucocorticoid production. Plays an anti-inflammatory role during the hepatic acute phase response by acting as a corepressor: inhibits the hepatic acute phase response by preventing dissociation of the N-Cor corepressor complex. Acts as a regulator of immunity by promoting lymphocyte T-cell development, proliferation and effector functions. Also involved in resolution of endoplasmic reticulum stress in the liver. Its function is as follows. In constrast to isoform 1 and isoform 2, does not induce cholesterol 7-alpha-hydroxylase gene (CYP7A) promoter activity. Functionally, (Microbial infection) Plays a crucial role for hepatitis B virus gene transcription and DNA replication. Mechanistically, synergistically cooperates with HNF1A to up-regulate the activity of one of the critical cis-elements in the hepatitis B virus genome enhancer II (ENII). In Homo sapiens (Human), this protein is Nuclear receptor subfamily 5 group A member 2.